Reading from the N-terminus, the 180-residue chain is Virion protein US10 homolog (180 aa).

Belongs to the herpesviridae US10 family. Post-translationally, phosphorylated.

The protein resides in the virion tegument. It localises to the host nucleus matrix. This Varicella-zoster virus (strain Dumas) (HHV-3) protein is Virion protein US10 homolog (64).